We begin with the raw amino-acid sequence, 695 residues long: Follicle-stimulating hormone receptor (695 aa).

The first 17 residues, methionine 1–glycine 17, serve as a signal peptide directing secretion. 2 cysteine pairs are disulfide-bonded: cysteine 18–cysteine 25 and cysteine 23–cysteine 32. The LRRNT domain occupies cysteine 18–arginine 46. Residues cysteine 18 to arginine 366 are Extracellular-facing. 9 LRR repeats span residues valine 49 to leucine 72, glutamate 73 to leucine 97, histidine 98 to asparagine 118, leucine 119 to serine 143, leucine 144 to serine 169, serine 170 to glycine 192, threonine 193 to glycine 216, alanine 217 to asparagine 240, and leucine 241 to glutamate 259. Residues asparagine 191 and asparagine 199 are each glycosylated (N-linked (GlcNAc...) asparagine). 4 cysteine pairs are disulfide-bonded: cysteine 275–cysteine 346, cysteine 276–cysteine 292, cysteine 276–cysteine 356, and cysteine 292–cysteine 338. N-linked (GlcNAc...) asparagine glycosylation occurs at asparagine 293. At tyrosine 335 the chain carries Sulfotyrosine. Residues valine 367–leucine 387 traverse the membrane as a helical segment. The Cytoplasmic segment spans residues threonine 388 to arginine 398. Residues phenylalanine 399 to valine 421 traverse the membrane as a helical segment. Residues aspartate 422–alanine 443 are Extracellular-facing. An intrachain disulfide couples cysteine 442 to cysteine 517. A helical transmembrane segment spans residues aspartate 444–leucine 465. At glutamate 466 to histidine 485 the chain is on the cytoplasmic side. Residues alanine 486 to valine 508 form a helical membrane-spanning segment. At serine 509 to glutamine 528 the chain is on the extracellular side. Residues leucine 529–leucine 550 traverse the membrane as a helical segment. The Cytoplasmic segment spans residues histidine 551–arginine 573. A helical transmembrane segment spans residues methionine 574–leucine 597. The Extracellular segment spans residues lysine 598–lysine 608. A helical transmembrane segment spans residues isoleucine 609–threonine 630. Residues lysine 631–asparagine 695 lie on the Cytoplasmic side of the membrane. Positions threonine 658–arginine 677 are disordered.

It belongs to the G-protein coupled receptor 1 family. FSH/LSH/TSH subfamily. Homotrimer. Functions as a homotrimer binding the FSH hormone heterodimer composed of CGA and FSHB. Interacts with ARRB2. Interacts with APPL2; interaction is independent of follicle stimulating hormone stimulation. N-glycosylated; indirectly required for FSH-binding, possibly via a conformational change that allows high affinity binding of hormone. Post-translationally, sulfated.

Its subcellular location is the cell membrane. Functionally, g protein-coupled receptor for follitropin, the follicle-stimulating hormone. Through cAMP production activates the downstream PI3K-AKT and ERK1/ERK2 signaling pathways. The sequence is that of Follicle-stimulating hormone receptor (FSHR) from Cavia porcellus (Guinea pig).